The primary structure comprises 306 residues: Low density lipoprotein receptor adapter protein 1 (306 aa).

N-acetylmethionine is present on methionine 1. Serine 14 carries the post-translational modification Phosphoserine. The region spanning 44-168 is the PID domain; sequence GMVFSLKYLG…VAQAFKVAFE (125 aa). The interval 178–204 is disordered; sequence EKREKANQEGGDVPGTRRDSTPSLKTS. Residues serine 197 and serine 200 each carry the phosphoserine modification. The Clathrin box signature appears at 210 to 214; it reads LLDLE. Positions 247–274 are AP-2 complex binding; it reads WELDDGLDEAFSRLAQSRTNPQVLDTGL. The short motif at 255-264 is the [DE]-X(1,2)-F-X-X-[FL]-X-X-X-R motif element; the sequence is EAFSRLAQSR.

As to quaternary structure, interacts (via PID domain) with LDLR (via NPXY motifs). Binds to soluble clathrin trimers. Interacts with AP2B1; the interaction mediates the association with the AP-2 complex. Interacts with VLDLR. Interacts with LRP2.

The protein localises to the cytoplasm. Functionally, adapter protein (clathrin-associated sorting protein (CLASP)) required for efficient endocytosis of the LDL receptor (LDLR) in polarized cells such as hepatocytes and lymphocytes, but not in non-polarized cells (fibroblasts). May be required for LDL binding and internalization but not for receptor clustering in coated pits. May facilitate the endocytosis of LDLR and LDLR-LDL complexes from coated pits by stabilizing the interaction between the receptor and the structural components of the pits. May also be involved in the internalization of other LDLR family members. Binds to phosphoinositides, which regulate clathrin bud assembly at the cell surface. Required for trafficking of LRP2 to the endocytic recycling compartment which is necessary for LRP2 proteolysis, releasing a tail fragment which translocates to the nucleus and mediates transcriptional repression. The chain is Low density lipoprotein receptor adapter protein 1 from Rattus norvegicus (Rat).